Reading from the N-terminus, the 160-residue chain is Protein-export protein SecB (160 aa).

The protein belongs to the SecB family. As to quaternary structure, homotetramer, a dimer of dimers. One homotetramer interacts with 1 SecA dimer.

It is found in the cytoplasm. In terms of biological role, one of the proteins required for the normal export of preproteins out of the cell cytoplasm. It is a molecular chaperone that binds to a subset of precursor proteins, maintaining them in a translocation-competent state. It also specifically binds to its receptor SecA. This is Protein-export protein SecB from Orientia tsutsugamushi (strain Boryong) (Rickettsia tsutsugamushi).